Consider the following 317-residue polypeptide: Type II methyltransferase M.NgoBI (317 aa).

In terms of domain architecture, SAM-dependent MTase C5-type spans 2–302 (YKTIDLFSGI…KICSLLFPAR (301 aa)). The active site involves Cys-71.

Belongs to the class I-like SAM-binding methyltransferase superfamily. C5-methyltransferase family.

It catalyses the reaction a 2'-deoxycytidine in DNA + S-adenosyl-L-methionine = a 5-methyl-2'-deoxycytidine in DNA + S-adenosyl-L-homocysteine + H(+). A methylase, recognizes the double-stranded sequence 5'-RGCGCY-3', methylates C-5 on both strands, and protects the DNA from cleavage by the NgoBI endonuclease. The sequence is that of Type II methyltransferase M.NgoBI (ngoBIM) from Neisseria gonorrhoeae.